The primary structure comprises 235 residues: Ribonuclease PH (235 aa).

Phosphate-binding positions include arginine 86 and 124–126 (GTR).

The protein belongs to the RNase PH family. Homohexameric ring arranged as a trimer of dimers.

The enzyme catalyses tRNA(n+1) + phosphate = tRNA(n) + a ribonucleoside 5'-diphosphate. Its function is as follows. Phosphorolytic 3'-5' exoribonuclease that plays an important role in tRNA 3'-end maturation. Removes nucleotide residues following the 3'-CCA terminus of tRNAs; can also add nucleotides to the ends of RNA molecules by using nucleoside diphosphates as substrates, but this may not be physiologically important. Probably plays a role in initiation of 16S rRNA degradation (leading to ribosome degradation) during starvation. The polypeptide is Ribonuclease PH (Francisella tularensis subsp. mediasiatica (strain FSC147)).